The following is a 335-amino-acid chain: Ketol-acid reductoisomerase (NADP(+)) (335 aa).

Positions 2 to 182 constitute a KARI N-terminal Rossmann domain; the sequence is AKIIYDNETT…GATRAGVYET (181 aa). Residues 25-28, arginine 48, serine 51, serine 53, and 83-86 contribute to the NADP(+) site; these read YGSQ and DENQ. Residue histidine 108 is part of the active site. Glycine 134 is a binding site for NADP(+). A KARI C-terminal knotted domain is found at 183–328; that stretch reads TFREETETDL…KQIRANIPWL (146 aa). Residues aspartate 191, glutamate 195, glutamate 227, and glutamate 231 each coordinate Mg(2+). Serine 252 contributes to the substrate binding site.

This sequence belongs to the ketol-acid reductoisomerase family. Mg(2+) serves as cofactor.

The catalysed reaction is (2R)-2,3-dihydroxy-3-methylbutanoate + NADP(+) = (2S)-2-acetolactate + NADPH + H(+). It carries out the reaction (2R,3R)-2,3-dihydroxy-3-methylpentanoate + NADP(+) = (S)-2-ethyl-2-hydroxy-3-oxobutanoate + NADPH + H(+). Its pathway is amino-acid biosynthesis; L-isoleucine biosynthesis; L-isoleucine from 2-oxobutanoate: step 2/4. It functions in the pathway amino-acid biosynthesis; L-valine biosynthesis; L-valine from pyruvate: step 2/4. In terms of biological role, involved in the biosynthesis of branched-chain amino acids (BCAA). Catalyzes an alkyl-migration followed by a ketol-acid reduction of (S)-2-acetolactate (S2AL) to yield (R)-2,3-dihydroxy-isovalerate. In the isomerase reaction, S2AL is rearranged via a Mg-dependent methyl migration to produce 3-hydroxy-3-methyl-2-ketobutyrate (HMKB). In the reductase reaction, this 2-ketoacid undergoes a metal-dependent reduction by NADPH to yield (R)-2,3-dihydroxy-isovalerate. The sequence is that of Ketol-acid reductoisomerase (NADP(+)) from Methanosarcina barkeri (strain Fusaro / DSM 804).